We begin with the raw amino-acid sequence, 644 residues long: 3-isopropylmalate dehydratase (644 aa).

Positions 400, 460, and 463 each coordinate [4Fe-4S] cluster. A disordered region spans residues 521–568; it reads SEIPGTPKQSPRQEVVAEFESEEDDVDSSSVDSAPVATPPSTGDSAGM. Residues 537–547 are compositionally biased toward acidic residues; that stretch reads AEFESEEDDVD.

This sequence belongs to the aconitase/IPM isomerase family. As to quaternary structure, monomer. Requires [4Fe-4S] cluster as cofactor.

It catalyses the reaction (2R,3S)-3-isopropylmalate = (2S)-2-isopropylmalate. It participates in amino-acid biosynthesis; L-leucine biosynthesis; L-leucine from 3-methyl-2-oxobutanoate: step 2/4. In terms of biological role, catalyzes the isomerization between 2-isopropylmalate and 3-isopropylmalate, via the formation of 2-isopropylmaleate. This is 3-isopropylmalate dehydratase (LEUA) from Mucor circinelloides f. lusitanicus (Mucor racemosus var. lusitanicus).